The following is a 236-amino-acid chain: Small ribosomal subunit protein uS2c (236 aa).

Belongs to the universal ribosomal protein uS2 family.

Its subcellular location is the plastid. The protein resides in the chloroplast. This Platanus occidentalis (Sycamore) protein is Small ribosomal subunit protein uS2c (rps2).